Here is a 134-residue protein sequence, read N- to C-terminus: DNA-binding protein inhibitor ID-2 (134 aa).

Phosphoserine is present on residues Ser14 and Ser25. The region spanning Ser23–Leu75 is the bHLH domain. Residues Leu106 to Leu115 carry the Nuclear export signal motif.

In terms of assembly, interacts with GATA4 and NKX2-5. Interacts with NR0B2. Interacts with CLOCK and BMAL1. Interacts with IFI204. Interacts with NEDD9/HEF1. Interacts with ASB4; this interaction promotes ID2 proteasomal degradation. In terms of processing, ubiquitinated in a ASB4-depedent manner, leading to proteasomal degradation. Phosphorylated in vitro by CDK1, PKA and PKC.

It localises to the cytoplasm. It is found in the nucleus. In terms of biological role, transcriptional regulator (lacking a basic DNA binding domain) which negatively regulates the basic helix-loop-helix (bHLH) transcription factors by forming heterodimers and inhibiting their DNA binding and transcriptional activity. Implicated in regulating a variety of cellular processes, including cellular growth, senescence, differentiation, apoptosis, angiogenesis, and neoplastic transformation. Inhibits skeletal muscle and cardiac myocyte differentiation. Regulates the circadian clock by repressing the transcriptional activator activity of the CLOCK-BMAL1 heterodimer. Restricts the CLOCK and BMAL1 localization to the cytoplasm. Plays a role in both the input and output pathways of the circadian clock: in the input component, is involved in modulating the magnitude of photic entrainment and in the output component, contributes to the regulation of a variety of liver clock-controlled genes involved in lipid metabolism. The chain is DNA-binding protein inhibitor ID-2 (ID2) from Sus scrofa (Pig).